A 999-amino-acid polypeptide reads, in one-letter code: Testis anion transporter 1 (999 aa).

The Cytoplasmic portion of the chain corresponds to 1-93 (MQTERSLQSF…YRFKDWLLGD (93 aa)). A helical membrane pass occupies residues 94-114 (LLAGLSVGLVQVPQGLILSLL). Residues 115–117 (TRQ) are Extracellular-facing. The helical transmembrane segment at 118–138 (LIPPLNVTYAAFCSSVIYVIF) threads the bilayer. Glycine 139 is a topological domain (cytoplasmic). The helical transmembrane segment at 140-160 (SCHQMSIGPFFLVSALMINVL) threads the bilayer. Topologically, residues 161 to 200 (KDRPFNNGHLILGTFVKDDFSVPTFYLSYNRSLSMVASTT) are extracellular. An N-linked (GlcNAc...) asparagine glycan is attached at asparagine 190. A helical transmembrane segment spans residues 201–221 (FLTGIIQLSMGMLGMGFMATY). Topologically, residues 222 to 230 (LPEAATSAY) are cytoplasmic. A helical transmembrane segment spans residues 231-251 (LAAVALHIILAQMTCILGIMV). Over 252-268 (SFHAGPISFIYNIINYC) the chain is Extracellular. The helical transmembrane segment at 269-289 (IALPKANSTSILLFITSVVAL) threads the bilayer. The Cytoplasmic segment spans residues 290 to 305 (RINKCIRITFNRYPIE). The chain crosses the membrane as a helical span at residues 306–326 (FPMELLLILGFSLLTSKITMA). Topologically, residues 327 to 354 (TENSKMLMNMIPYSFVFPENPEFGILSR) are extracellular. Residues 355–375 (VVLQALSLSFVSSFLLISLGK) form a helical membrane-spanning segment. The Cytoplasmic portion of the chain corresponds to 376–390 (KIANFHNYRTNSNQD). A helical transmembrane segment spans residues 391 to 411 (LIAIGLCNLLSSFFKCCVFTG). Topologically, residues 412-427 (SLSRTTIQDKSGGRQQ) are extracellular. The chain crosses the membrane as a helical span at residues 428–448 (FASLVGAGVMLLLMVKMESFF). At 449–453 (HNLPN) the chain is on the cytoplasmic side. Residues 454-474 (AVLAGIILSNVVPYLEAIYNL) traverse the membrane as a helical segment. At 475 to 494 (PSLWRQDQYECIIWMVTFSS) the chain is on the extracellular side. The helical transmembrane segment at 495–515 (AILLGLDVGLLISLAFTFFVI) threads the bilayer. Over 516-544 (TIRSHRTKILVLGQIPNTNIYRNVNDYRE) the chain is Cytoplasmic. The region spanning 541 to 796 (DYREVILIPG…LSLHDAVLFA (256 aa)) is the STAS domain. The chain crosses the membrane as a helical span at residues 545-565 (VILIPGVKIFQCCSSITFVNV). Residues 566–999 (YHLKQKVLKE…RKPHNYPNSP (434 aa)) are Extracellular-facing. Residues 661–999 (TVSSTSQRNI…RKPHNYPNSP (339 aa)) are interaction with RACGAP1. 2 disordered regions span residues 678-701 (EKAW…SESL) and 893-999 (SELD…PNSP). Pro residues predominate over residues 684 to 696 (NSPPRNSPLPPPE). Acidic residues-rich tracts occupy residues 893 to 903 (SELDPGSELDS) and 912 to 947 (ELES…EPEP). The span at 973–982 (GSSNSQSRAP) shows a compositional bias: polar residues.

It belongs to the SLC26A/SulP transporter (TC 2.A.53) family. As to quaternary structure, interacts with RACGAP1. Interacts with CFTR; stimulates anion transport activity of CFTR. N-glycosylated. Expressed in testis and epididymis. Located at the end of the midpiece of the flagella, known as the annulus, in spermatozoa.

It is found in the membrane. The enzyme catalyses sulfate(out) + chloride(in) = sulfate(in) + chloride(out). It catalyses the reaction oxalate(in) + chloride(out) = oxalate(out) + chloride(in). In terms of biological role, antiporter that mediates the exchange of sulfate and oxalate against chloride ions across a membrane. Stimulates anion transport activity of CFTR. May cooperate with CFTR in the regulation of chloride and bicarbonate ions fluxes required for activation of the ADCY10/PKA pathway during sperm motility and sperm capacitation. May play a role in sperm tail differentiation and motility and hence male fertility. The chain is Testis anion transporter 1 from Mus musculus (Mouse).